The primary structure comprises 226 residues: MSDPISFKVILVGDGATGKTTFVTRHITGEFRKQYISTIGVEIRQLPFYVAGQSCPNGREVLLNVHDTAGQEKFGGLRDGYYVDSDACLLFFDVTNRVTYKNVESWYRDVFRICPTRRDASTGEEKPLAIVLVGNKCDVKDREIRTQTVKFHRSKNIPYVEISAKDNFNYELPILSILRTLLNDPTIQFSQAPALLPADIGMDAATREQINKDLEAVNNVPLPDDD.

Positions 3 to 184 (DPISFKVILV…LSILRTLLND (182 aa)) constitute a Small GTPase Ran-type domain. Residue 14–21 (DGATGKTT) participates in GTP binding. The segment at 33-41 (KQYISTIGV) is switch-I. GTP-binding positions include G70, 135 to 138 (NKCD), and 163 to 165 (SAK). Positions 70–86 (GQEKFGGLRDGYYVDSD) are switch-II.

Belongs to the small GTPase superfamily. Ran family. As to quaternary structure, found in a nuclear export complex with RanGTP, exportin and pre-miRNA.

The protein resides in the nucleus. In terms of biological role, GTP-binding protein involved in nucleocytoplasmic transport. Required for the import of protein into the nucleus and also for RNA export. Involved in chromatin condensation and control of cell cycle. The sequence is that of GTP-binding nuclear protein Ran from Giardia intestinalis (Giardia lamblia).